A 243-amino-acid polypeptide reads, in one-letter code: LexA repressor 2 (243 aa).

Positions 48-68 form a DNA-binding region, H-T-H motif; the sequence is IREIGDAVGLTSTSSVAHQLR. Active-site for autocatalytic cleavage activity residues include Ser-167 and Lys-204.

Belongs to the peptidase S24 family. In terms of assembly, homodimer.

It carries out the reaction Hydrolysis of Ala-|-Gly bond in repressor LexA.. Represses a number of genes involved in the response to DNA damage (SOS response), including recA and lexA. In the presence of single-stranded DNA, RecA interacts with LexA causing an autocatalytic cleavage which disrupts the DNA-binding part of LexA, leading to derepression of the SOS regulon and eventually DNA repair. The chain is LexA repressor 2 from Nocardia farcinica (strain IFM 10152).